A 323-amino-acid chain; its full sequence is Sphingolipid delta(4)-desaturase DES1 (323 aa).

Transmembrane regions (helical) follow at residues 41–61 (YNLIWVVMLMVAAQLTAFYLV) and 68–88 (WVVFWAYVFGSCISHSMTLAI). Residues 89-93 (HEISH) carry the Histidine box-1 motif. The helical transmembrane segment at 102-122 (AMWNRWFGIFANLPLGLPYSI) threads the bilayer. Residues 128-132 (HMDHH) carry the Histidine box-2 motif. 3 helical membrane-spanning segments follow: residues 159-179 (KFIWIVLQPFFYAIRPLCINP), 185-205 (LEIINLLAQLFFDIVIYYLWG), and 209-229 (IFYMLAGSVLGLGLHPISGHF). The Histidine box-3 motif lies at 259-263 (HNEHH).

The protein belongs to the fatty acid desaturase type 1 family. DEGS subfamily. In terms of assembly, interacts with RLBP1; the interaction increases synthesis of chromophore-precursors by DEGS1. In terms of tissue distribution, expressed in retina and retinal pigment epithelium by Mueller cells (at protein level).

It localises to the endoplasmic reticulum membrane. The enzyme catalyses an N-acylsphinganine + 2 Fe(II)-[cytochrome b5] + O2 + 2 H(+) = an N-acylsphing-4-enine + 2 Fe(III)-[cytochrome b5] + 2 H2O. It carries out the reaction all-trans-retinol = 11-cis-retinol. It catalyses the reaction all-trans-retinol = 9-cis-retinol. The catalysed reaction is all-trans-retinol = 13-cis-retinol. The enzyme catalyses 11-cis-retinol = 13-cis-retinol. It carries out the reaction 11-cis-retinol = 9-cis-retinol. In terms of biological role, has sphingolipid-delta-4-desaturase activity. Converts D-erythro-sphinganine to D-erythro-sphingosine (E-sphing-4-enine). Catalyzes the equilibrium isomerization of retinols. The protein is Sphingolipid delta(4)-desaturase DES1 (DEGS1) of Gallus gallus (Chicken).